The chain runs to 154 residues: Aspartate carbamoyltransferase regulatory chain (154 aa).

Zn(2+)-binding residues include C109, C114, C138, and C141.

Belongs to the PyrI family. As to quaternary structure, contains catalytic and regulatory chains. Zn(2+) is required as a cofactor.

Its function is as follows. Involved in allosteric regulation of aspartate carbamoyltransferase. The sequence is that of Aspartate carbamoyltransferase regulatory chain from Tolumonas auensis (strain DSM 9187 / NBRC 110442 / TA 4).